Consider the following 153-residue polypeptide: Mitochondrial import inner membrane translocase subunit TIM14 (153 aa).

The Mitochondrial intermembrane segment spans residues 1–43 (MDGTGISDGSSVTGDAAAGFPAGATQAPGSKQGMDLYFDNALQ). Residues 44–66 (YMGEHPVLAGVGGFLALYVGAGV) form a helical membrane-spanning segment. Residues 67 to 153 (YKGVQTRLNG…FLEKKGIVRK (87 aa)) are Mitochondrial matrix-facing. Positions 96-153 (EALQILNLKENNLTTKKLKEVHRKIMLANHPDKGGSPYLATKINEAKDFLEKKGIVRK) constitute a J domain.

The protein belongs to the TIM14 family. As to quaternary structure, heterodimer with PAM16. Component of the PAM complex, at least composed of mtHsp70, MGE1, TIM44, PAM16, PAM17 and PAM18.

It is found in the mitochondrion inner membrane. Functionally, essential component of the PAM complex, a complex required for the translocation of transit peptide-containing proteins from the inner membrane into the mitochondrial matrix in an ATP-dependent manner. In the complex, it is required to stimulate activity of mtHSP70 (SSC1). The polypeptide is Mitochondrial import inner membrane translocase subunit TIM14 (PAM18) (Candida glabrata (strain ATCC 2001 / BCRC 20586 / JCM 3761 / NBRC 0622 / NRRL Y-65 / CBS 138) (Yeast)).